The sequence spans 277 residues: Probable septum site-determining protein MinC (277 aa).

The interval 137–164 (ATTGNAPAEPAPAEPAAPAAAPQPPAVP) is disordered. Residues 145–164 (EPAPAEPAAPAAAPQPPAVP) are compositionally biased toward pro residues.

The protein belongs to the MinC family. As to quaternary structure, interacts with MinD and FtsZ.

Its function is as follows. Cell division inhibitor that blocks the formation of polar Z ring septums. Rapidly oscillates between the poles of the cell to destabilize FtsZ filaments that have formed before they mature into polar Z rings. Prevents FtsZ polymerization. The chain is Probable septum site-determining protein MinC from Bordetella petrii (strain ATCC BAA-461 / DSM 12804 / CCUG 43448).